Reading from the N-terminus, the 278-residue chain is MQTHYYELFFQTDKEYLDLFLDLVFSLDIDAIEEKNDGVYIRSEEDIKLIQIALQSFHQRLCEKFNTKIYFHSTLEKKENKNWIEEYKKGIQALTIDNIHIHTTWQKPKQDKINIIIDPALAFGSGHHESTYTCIEFLQKYTDGSKFCLDVGCGSGILSIIMAKLGAKVQACDTDELAIVASKENAKLNRVSFNDIWVGSVNKSLHKYDIVVANIIADILIILEKDLKEKTKEGGILILSGILNKYEDRIKDKFKDLTLLETKYKGEWLSLAYKKETK.

S-adenosyl-L-methionine is bound by residues threonine 131, glycine 152, aspartate 173, and asparagine 214.

It belongs to the methyltransferase superfamily. PrmA family.

Its subcellular location is the cytoplasm. It catalyses the reaction L-lysyl-[protein] + 3 S-adenosyl-L-methionine = N(6),N(6),N(6)-trimethyl-L-lysyl-[protein] + 3 S-adenosyl-L-homocysteine + 3 H(+). In terms of biological role, methylates ribosomal protein L11. The polypeptide is Ribosomal protein L11 methyltransferase (Campylobacter lari (strain RM2100 / D67 / ATCC BAA-1060)).